The following is a 235-amino-acid chain: Large ribosomal subunit protein uL1 (235 aa).

Belongs to the universal ribosomal protein uL1 family. In terms of assembly, part of the 50S ribosomal subunit.

In terms of biological role, binds directly to 23S rRNA. The L1 stalk is quite mobile in the ribosome, and is involved in E site tRNA release. Functionally, protein L1 is also a translational repressor protein, it controls the translation of the L11 operon by binding to its mRNA. The sequence is that of Large ribosomal subunit protein uL1 from Thermobifida fusca (strain YX).